Consider the following 359-residue polypeptide: Fe-S cluster assembly protein DRE2 (359 aa).

The interval 1-159 (MANILLLLHP…LFKKLSSNSN (159 aa)) is N-terminal SAM-like domain. The tract at residues 152-187 (KKLSSNSNNNNNSSSPIGLTDSSAANTDEETDEANV) is disordered. Residues 155–166 (SSNSNNNNNSSS) are compositionally biased toward low complexity. The interval 159-228 (NNNNNSSSPI…DDLIKDSNQL (70 aa)) is linker. The segment covering 167–177 (PIGLTDSSAAN) has biased composition (polar residues). Cys240, Cys252, Cys255, and Cys257 together coordinate [2Fe-2S] cluster. Positions 240 to 257 (CEIPNGKKRRKACKDCTC) are fe-S binding site A. Residues Cys322, Cys325, Cys333, and Cys336 each coordinate [4Fe-4S] cluster. Short sequence motifs (cx2C motif) lie at residues 322-325 (CGSC) and 333-336 (CDGC). Positions 322–336 (CGSCALGDAFRCDGC) are fe-S binding site B.

The protein belongs to the anamorsin family. Monomer. Interacts with TAH18. Interacts with MIA40. The cofactor is [2Fe-2S] cluster. [4Fe-4S] cluster serves as cofactor.

It localises to the cytoplasm. The protein localises to the mitochondrion intermembrane space. Component of the cytosolic iron-sulfur (Fe-S) protein assembly (CIA) machinery required for the maturation of extramitochondrial Fe-S proteins. Part of an electron transfer chain functioning in an early step of cytosolic Fe-S biogenesis, facilitating the de novo assembly of a [4Fe-4S] cluster on the scaffold complex CFD1-NBP35. Electrons are transferred to DRE2 from NADPH via the FAD- and FMN-containing protein TAH18. TAH18-DRE2 are also required for the assembly of the diferric tyrosyl radical cofactor of ribonucleotide reductase (RNR), probably by providing electrons for reduction during radical cofactor maturation in the catalytic small subunit RNR2. This chain is Fe-S cluster assembly protein DRE2, found in Scheffersomyces stipitis (strain ATCC 58785 / CBS 6054 / NBRC 10063 / NRRL Y-11545) (Yeast).